Here is a 1501-residue protein sequence, read N- to C-terminus: Pleiotropic ABC efflux transporter of multiple drugs CDR1 (1501 aa).

The interval 1 to 30 is disordered; that stretch reads MSDSKMSSQDESKLEKAISQDSSSENHSIN. Residues 1 to 513 lie on the Cytoplasmic side of the membrane; sequence MSDSKMSSQD…NFLRMKGDPS (513 aa). The tract at residues 2–512 is NBD1; the sequence is SDSKMSSQDE…RNFLRMKGDP (511 aa). The span at 8 to 18 shows a compositional bias: basic and acidic residues; sequence SQDESKLEKAI. Positions 150 to 404 constitute an ABC transporter 1 domain; sequence LATEGFRHFQ…FEKMGWKCPQ (255 aa). A helical transmembrane segment spans residues 514–534; the sequence is IPIFSVFGQLVMGLILSSVFY. Residues 535-548 lie on the Extracellular side of the membrane; the sequence is NLSQTTGSFYYRGA. A helical transmembrane segment spans residues 549–569; it reads AMFFAVLFNAFSSLLEIMSLF. At 570–597 the chain is on the cytoplasmic side; sequence EARPIVEKHKKYALYRPSADALASIISE. A helical membrane pass occupies residues 598–618; that stretch reads LPVKLAMSMSFNFVFYFMVNF. Over 619–622 the chain is Extracellular; sequence RRNP. A helical transmembrane segment spans residues 623–643; the sequence is GRFFFYWLMCIWCTFVMSHLF. Topologically, residues 644 to 654 are cytoplasmic; it reads RSIGAVSTSIS. A helical transmembrane segment spans residues 655–675; that stretch reads GAMTPATVLLLAMVIYTGFVI. Over 676 to 764 the chain is Extracellular; that stretch reads PTPSMLGWSR…QYYNSHKWRN (89 aa). The helical transmembrane segment at 765–785 threads the bilayer; that stretch reads LGITIGFAVFFLAIYIALTEF. Residues 786–1195 are Cytoplasmic-facing; the sequence is NKGAMQKGEI…TIVQDWRSPG (410 aa). The segment at 786–1195 is NBD2; that stretch reads NKGAMQKGEI…TIVQDWRSPG (410 aa). In terms of domain architecture, ABC transporter 2 spans 859-1103; that stretch reads FFWRDLTYQV…MINYFEKYGA (245 aa). Residue 895-902 coordinates ATP; sequence GASGAGKT. A coiled-coil region spans residues 1137-1164; sequence RNSSEYQAVREEINRMEAELSKLPRDND. A helical transmembrane segment spans residues 1196 to 1216; that stretch reads YIYSKIFLVVSAALFNGFSFF. The Extracellular segment spans residues 1217–1229; sequence KAKNNMQGLQNQM. Residues 1230 to 1250 form a helical membrane-spanning segment; it reads FSVFMFFIPFNTLVQQMLPYF. At 1251–1280 the chain is on the cytoplasmic side; that stretch reads VKQRDVYEVREAPSRTFSWFAFIAGQITSE. Residues 1281–1301 form a helical membrane-spanning segment; it reads IPYQVAVGTIAFFCWYYPLGL. At 1302–1314 the chain is on the extracellular side; it reads YNNATPTDSVNPR. Residues 1315–1335 traverse the membrane as a helical segment; sequence GVLMWMLVTAFYVYTATMGQL. Over 1336–1355 the chain is Cytoplasmic; it reads CMSFSELADNAANLATLLFT. A helical membrane pass occupies residues 1356–1376; it reads MCLNFCGVLAGPDVLPGFWIF. Topologically, residues 1377–1466 are extracellular; it reads MYRCNPFTYL…NSLYSERWRN (90 aa). A helical transmembrane segment spans residues 1467–1487; it reads FGIFIAFIAINIILTVIFYWL. Residues 1488 to 1501 lie on the Cytoplasmic side of the membrane; it reads ARVPKGNREKKNKK.

Belongs to the ABC transporter superfamily.

The protein resides in the cell membrane. Disulfiram reverses CDR1-mediated drug resistance by interaction with both ATP and substrate-binding sites of the transporter and may be useful for antifungal therapy. Its function is as follows. Pleiotropic ABC efflux transporter that confers resistance to numerous chemicals including anisomycin, cycloheximide, fluconazole, miconazole, ketoconazole, itriconazole, nystatin, terbinafine, amorolfine, brefeldin A, amphotericin B, fluphenazine, as well as estrogen. Plays a role in farnesol-induced apoptotic process through glutathione efflux activity. Mediates in-to-out translocation of membrane phospholipids including aminophospholipids and thus regulates asymmetric distribution of phosphatidylethanolamine. Exhibits nucleoside triphosphatase activity. The protein is Pleiotropic ABC efflux transporter of multiple drugs CDR1 (CDR1) of Candida albicans (strain SC5314 / ATCC MYA-2876) (Yeast).